The primary structure comprises 388 residues: Chorismate synthase (388 aa).

NADP(+) contacts are provided by arginine 39 and arginine 45. FMN is bound by residues 132–134 (RSS), 251–252 (NA), glycine 296, 311–315 (KPIPT), and arginine 337.

Belongs to the chorismate synthase family. In terms of assembly, homotetramer. The cofactor is FMNH2.

It carries out the reaction 5-O-(1-carboxyvinyl)-3-phosphoshikimate = chorismate + phosphate. Its pathway is metabolic intermediate biosynthesis; chorismate biosynthesis; chorismate from D-erythrose 4-phosphate and phosphoenolpyruvate: step 7/7. In terms of biological role, catalyzes the anti-1,4-elimination of the C-3 phosphate and the C-6 proR hydrogen from 5-enolpyruvylshikimate-3-phosphate (EPSP) to yield chorismate, which is the branch point compound that serves as the starting substrate for the three terminal pathways of aromatic amino acid biosynthesis. This reaction introduces a second double bond into the aromatic ring system. In Staphylococcus epidermidis (strain ATCC 35984 / DSM 28319 / BCRC 17069 / CCUG 31568 / BM 3577 / RP62A), this protein is Chorismate synthase.